We begin with the raw amino-acid sequence, 193 residues long: Flagellin B1 (193 aa).

A propeptide spanning residues 1 to 12 (MFEFITDEDERG) is cleaved from the precursor.

This sequence belongs to the archaeal flagellin family. Post-translationally, glycosylated.

The protein resides in the archaeal flagellum. Its function is as follows. Flagellin is the subunit protein which polymerizes to form the filaments of archaeal flagella. The chain is Flagellin B1 (flaB1) from Halobacterium salinarum (strain ATCC 700922 / JCM 11081 / NRC-1) (Halobacterium halobium).